The sequence spans 101 residues: uncharacterized protein (101 aa).

The next 2 helical transmembrane spans lie at 10 to 30 and 67 to 87; these read VLAI…IGSI and IILG…ILSI.

It localises to the membrane. This is an uncharacterized protein from Acanthamoeba polyphaga (Amoeba).